The sequence spans 1905 residues: MRRWWGALLLGALLCAHGTASNLECACGRSHFTCAVSALGECTCIPAQWQCDGDNDCGDHSDEDGCTLPTCSPLDFHCDNGKCIRRSWVCDGDNDCEDDSDEQDCPPRECEEDEFPCQNGYCIRSLWHCDGDNDCGDNSDEQCDMRKCSDKEFRCSDGSCIAEHWYCDGDTDCKDGSDEESCPSAVPSPPCNLEEFQCAYGRCILDIYHCDGDDDCGDWSDESDCSSHQPCRSGEFMCDSGLCVNAGWRCDGDADCDDQSDERNCTTSMCTAEQFRCRSGRCVRLSWRCDGEDDCADNSDEENCENTGSPQCASDQFLCWNGRCIGQRKLCNGVNDCGDNSDESPQQNCRPRTGEENCNVNNGGCAQKCQMIRGAVQCTCHTGYRLTEDGRTCQDVNECAEEGYCSQGCTNSEGAFQCWCEAGYELRPDRRSCKALGPEPVLLFANRIDIRQVLPHRSEYTLLLNNLENAIALDFHHRRELVFWSDVTLDRILRANLNGSNVEEVVSTGLESPGGLAVDWVHDKLYWTDSGTSRIEVANLDGAHRKVLLWQSLEKPRAIALHPMEGTIYWTDWGNTPRIEASSMDGSGRRIIADTHLFWPNGLTIDYAGRRMYWVDAKHHVIERANLDGSHRKAVISQGLPHPFAITVFEDSLYWTDWHTKSINSANKFTGKNQEIIRNKLHFPMDIHTLHPQRQPAGKNRCGDNNGGCTHLCLPSGQNYTCACPTGFRKINSHACAQSLDKFLLFARRMDIRRISFDTEDLSDDVIPLADVRSAVALDWDSRDDHVYWTDVSTDTISRAKWDGTGQKVVVDTSLESPAGLAIDWVTNKLYWTDAGTDRIEVANTDGSMRTVLIWENLDRPRDIVVEPMGGYMYWTDWGASPKIERAGMDASNRQVIISSNLTWPNGLAIDYGSQRLYWADAGMKTIEFAGLDGSKRKVLIGSQLPHPFGLTLYGQRIYWTDWQTKSIQSADRLTGLDRETLQENLENLMDIHVFHRQRPPVTTPCAVENGGCSHLCLRSPSPSGFSCTCPTGINLLLDGKTCSPGMNSFLIFARRIDVRMVSLDIPYFADVVVPINMTMKNTIAIGVDPLEGKVYWSDSTLHRISRASLDGSQHEDIITTGLQTTDGLAVDAIGRKVYWTDTGTNRIEVGNLDGSMRKVLVWQNLDSPRAIVLYHEMGFMYWTDWGENAKLERSGMDGSDRTVLINNNLGWPNGLTVDKTSSQLLWADAHTERIEVADLNGANRHTLVSPVQHPYGLTLLDSYIYWTDWQTRSIHRADKSTGSNVILVRSNLPGLMDIQAVDRAQPLGFNKCGSRNGGCSHLCLPRPSGFSCACPTGIQLKGDGKTCDPSPETYLLFSSRGSIRRISLDTDDHTDVHVPVPGLNNVISLDYDSVDGKVYYTDVFLDVIRRADLNGSNMETVIGHGLKTTDGLAVDWVARNLYWTDTGRNTIEASRLDGSCRKVLINNSLDEPRAIAVFPRKGYLFWTDWGHIAKIERANLDGSERKVLINADLGWPNGLTLDYDTRRIYWVDAHLDRIESADLNGKLRQVLVSHVSHPFALTQQDRWIYWTDWQTKSIQRVDKYSGRNKETVLANVEGLMDIIVVSPQRQTGTNACGVNNGGCSHLCFARASDFVCACPDEPDSHPCSLVPGLMPPAPRATSLNEKSPVLPNTLPTTLHSSTTRTRTSPEGAEGRCSERDAQLGLCAHSNEAVPAAPGEGLHVSYAVGGLLSVLLILLVTAALMLYRHRKSKFTDPGMGNLTYSNPSYRTSTQEVKIEAAPKPAMYNQLCYKKEGGPDHSYTKEKIKIVEGIHLLAGHDAEWGDLKQLRSSRGGLLRDHVCMKTDTVSIQASSGSLDDTETEQLLQEEQSECSSVHTATTPERRGSLPDTGWKHERKLSSESQV.

Positions 1 to 20 (MRRWWGALLLGALLCAHGTA) are cleaved as a signal peptide. The Extracellular segment spans residues 21-1723 (SNLECACGRS…VPAAPGEGLH (1703 aa)). 8 LDL-receptor class A domains span residues 26–67 (ACGR…DGCT), 70–106 (TCSP…QDCP), 109–144 (ECEE…EQCD), 147–183 (KCSD…ESCP), 190–226 (PCNL…SDCS), 230–266 (PCRS…RNCT), 269–305 (MCTA…ENCE), and 311–350 (QCAS…QNCR). 30 disulfides stabilise this stretch: Cys27-Cys44, Cys34-Cys57, Cys51-Cys66, Cys71-Cys83, Cys78-Cys96, Cys90-Cys105, Cys110-Cys122, Cys117-Cys135, Cys129-Cys143, Cys148-Cys160, Cys155-Cys173, Cys167-Cys182, Cys191-Cys203, Cys198-Cys216, Cys210-Cys225, Cys231-Cys243, Cys238-Cys256, Cys250-Cys265, Cys270-Cys282, Cys277-Cys295, Cys289-Cys304, Cys312-Cys324, Cys319-Cys337, Cys331-Cys349, Cys358-Cys369, Cys365-Cys378, Cys380-Cys393, Cys399-Cys409, Cys405-Cys418, and Cys420-Cys433. N-linked (GlcNAc...) asparagine glycosylation occurs at Asn264. The region spanning 354-394 (GEENCNVNNGGCAQKCQMIRGAVQCTCHTGYRLTEDGRTCQ) is the EGF-like 1; atypical domain. The region spanning 395 to 434 (DVNECAEEGYCSQGCTNSEGAFQCWCEAGYELRPDRRSCK) is the EGF-like 2; calcium-binding domain. 5 LDL-receptor class B repeats span residues 480-522 (ELVF…DWVH), 523-565 (DKLY…HPME), 566-609 (GTIY…DYAG), 610-652 (RRMY…FEDS), and 653-693 (LYWT…LHPQ). An N-linked (GlcNAc...) asparagine glycan is attached at Asn498. Positions 698 to 737 (GKNRCGDNNGGCTHLCLPSGQNYTCACPTGFRKINSHACA) constitute an EGF-like 3 domain. Intrachain disulfides connect Cys702/Cys713, Cys709/Cys722, and Cys724/Cys736. Asn719 is a glycosylation site (N-linked (GlcNAc...) asparagine). LDL-receptor class B repeat units lie at residues 785 to 827 (DHVY…DWVT), 828 to 870 (NKLY…EPMG), 871 to 914 (GYMY…DYGS), 915 to 956 (QRLY…LYGQ), and 957 to 998 (RIYW…FHRQ). An N-linked (GlcNAc...) asparagine glycan is attached at Asn901. N-linked (GlcNAc...) asparagine glycosylation is present at Asn1077. LDL-receptor class B repeat units follow at residues 1093–1135 (GKVY…DAIG), 1136–1178 (RKVY…YHEM), 1179–1222 (GFMY…DKTS), 1223–1263 (SQLL…LLDS), 1264–1306 (YIYW…DRAQ), 1397–1439 (GKVY…DWVA), 1440–1482 (RNLY…FPRK), 1483–1526 (GYLF…DYDT), 1527–1568 (RRIY…QDRW), and 1569–1610 (IYWT…SPQR). 2 N-linked (GlcNAc...) asparagine glycosylation sites follow: Asn1415 and Asn1467. A disordered region spans residues 1659-1696 (PRATSLNEKSPVLPNTLPTTLHSSTTRTRTSPEGAEGR). Over residues 1671-1690 (LPNTLPTTLHSSTTRTRTSP) the composition is skewed to low complexity. Residues 1724–1746 (VSYAVGGLLSVLLILLVTAALML) traverse the membrane as a helical segment. At 1747 to 1905 (YRHRKSKFTD…ERKLSSESQV (159 aa)) the chain is on the cytoplasmic side. The tract at residues 1853-1905 (SSGSLDDTETEQLLQEEQSECSSVHTATTPERRGSLPDTGWKHERKLSSESQV) is disordered. Residues 1872–1881 (ECSSVHTATT) are compositionally biased toward polar residues. The segment covering 1882 to 1905 (PERRGSLPDTGWKHERKLSSESQV) has biased composition (basic and acidic residues).

It belongs to the LDLR family. Homooligomer. Interacts with MUSK; the heterodimer forms an AGRIN receptor complex that binds AGRIN resulting in activation of MUSK. Interacts (via the extracellular domain) with SOST; the interaction facilitates the inhibition of Wnt signaling. Interacts with MESD; the interaction promotes glycosylation of LRP4 and its cell-surface expression. Post-translationally, N-glycosylation is required for cell surface location. In terms of tissue distribution, expressed in different regions of the brain, mainly in the olfactory bulb, at lower level in the cerebral cortex and hippocampus.

Its subcellular location is the cell membrane. Mediates SOST-dependent inhibition of bone formation. Functions as a specific facilitator of SOST-mediated inhibition of Wnt signaling. Plays a key role in the formation and the maintenance of the neuromuscular junction (NMJ), the synapse between motor neuron and skeletal muscle. Directly binds AGRIN and recruits it to the MUSK signaling complex. Mediates the AGRIN-induced phosphorylation of MUSK, the kinase of the complex. The activation of MUSK in myotubes induces the formation of NMJ by regulating different processes including the transcription of specific genes and the clustering of AChR in the postsynaptic membrane. Alternatively, may be involved in the negative regulation of the canonical Wnt signaling pathway, being able to antagonize the LRP6-mediated activation of this pathway. More generally, has been proposed to function as a cell surface endocytic receptor binding and internalizing extracellular ligands for degradation by lysosomes. Plays an essential role in the process of digit differentiation. The sequence is that of Low-density lipoprotein receptor-related protein 4 (Lrp4) from Rattus norvegicus (Rat).